The following is a 473-amino-acid chain: Sulfate adenylyltransferase subunit 1 (473 aa).

In terms of domain architecture, tr-type G spans 19–238; sequence KTLLKFLTCG…IKIKNSISSE (220 aa). A G1 region spans residues 28-35; sequence GSVDDGKS. Residue 28 to 35 participates in GTP binding; sequence GSVDDGKS. A G2 region spans residues 86 to 90; the sequence is GITID. The tract at residues 107–110 is G3; that stretch reads DTPG. GTP contacts are provided by residues 107-111 and 162-165; these read DTPGH and NKMD. The G4 stretch occupies residues 162-165; the sequence is NKMD. Residues 200-202 are G5; it reads SAL.

This sequence belongs to the TRAFAC class translation factor GTPase superfamily. Classic translation factor GTPase family. CysN/NodQ subfamily. As to quaternary structure, heterodimer composed of CysD, the smaller subunit, and CysN.

The enzyme catalyses sulfate + ATP + H(+) = adenosine 5'-phosphosulfate + diphosphate. It functions in the pathway sulfur metabolism; hydrogen sulfide biosynthesis; sulfite from sulfate: step 1/3. In terms of biological role, with CysD forms the ATP sulfurylase (ATPS) that catalyzes the adenylation of sulfate producing adenosine 5'-phosphosulfate (APS) and diphosphate, the first enzymatic step in sulfur assimilation pathway. APS synthesis involves the formation of a high-energy phosphoric-sulfuric acid anhydride bond driven by GTP hydrolysis by CysN coupled to ATP hydrolysis by CysD. This chain is Sulfate adenylyltransferase subunit 1, found in Buchnera aphidicola subsp. Acyrthosiphon pisum (strain APS) (Acyrthosiphon pisum symbiotic bacterium).